The chain runs to 122 residues: Large ribosomal subunit protein uL14 (122 aa).

Belongs to the universal ribosomal protein uL14 family. As to quaternary structure, part of the 50S ribosomal subunit. Forms a cluster with proteins L3 and L19. In the 70S ribosome, L14 and L19 interact and together make contacts with the 16S rRNA in bridges B5 and B8.

Binds to 23S rRNA. Forms part of two intersubunit bridges in the 70S ribosome. The protein is Large ribosomal subunit protein uL14 of Marinomonas sp. (strain MWYL1).